Consider the following 295-residue polypeptide: NADPH-dependent reductive aminase (295 aa).

The first 18 residues, 1-18 (MSKHIGIFGLGAMGTALA), serve as a signal peptide directing secretion. 6–20 (GIFGLGAMGTALAAK) provides a ligand contact to NADP(+).

It belongs to the HIBADH-related family. Homodimer. Requires NADPH as cofactor.

In terms of biological role, NADPH-dependent reductive aminase that catalyzes the reductive coupling of a broad set of carbonyl compounds with a variety of primary and secondary amines. Possesses remarkably high activity for the reductive amination of ketones and amines, often with high stereoselectivity and in some cases with ketone:amine ratios as low as 1:1. The cofactor NADPH, the carbonyl compound and the amine are added to the enzyme in that sequence, followed by the release of product, NADP(+) being released at last. RedAm is also able to act in the reverse, oxidative direction and exhibits activity in the dehydrogenation of amines to yield imines. The highest activity is found for 1-methyl-tetrahydroquinoline and acyclic amines are also found to be transformed. The sequence is that of NADPH-dependent reductive aminase from Aspergillus oryzae (strain ATCC 42149 / RIB 40) (Yellow koji mold).